Reading from the N-terminus, the 360-residue chain is Phospho-N-acetylmuramoyl-pentapeptide-transferase (360 aa).

A run of 10 helical transmembrane segments spans residues 20–40 (YITF…FFFG), 71–91 (TPTM…LLWA), 93–113 (LDNG…AIGF), 134–154 (LLIG…LHPA), 168–188 (ALIN…LGAA), 199–219 (GLAI…AYMV), 239–259 (LAVF…YNAP), 263–283 (VFMG…IAVV), 288–308 (IVLA…IIQV), and 337–357 (QIVI…LATL).

Belongs to the glycosyltransferase 4 family. MraY subfamily. Mg(2+) serves as cofactor.

It is found in the cell inner membrane. The enzyme catalyses UDP-N-acetyl-alpha-D-muramoyl-L-alanyl-gamma-D-glutamyl-meso-2,6-diaminopimeloyl-D-alanyl-D-alanine + di-trans,octa-cis-undecaprenyl phosphate = di-trans,octa-cis-undecaprenyl diphospho-N-acetyl-alpha-D-muramoyl-L-alanyl-D-glutamyl-meso-2,6-diaminopimeloyl-D-alanyl-D-alanine + UMP. It participates in cell wall biogenesis; peptidoglycan biosynthesis. Functionally, catalyzes the initial step of the lipid cycle reactions in the biosynthesis of the cell wall peptidoglycan: transfers peptidoglycan precursor phospho-MurNAc-pentapeptide from UDP-MurNAc-pentapeptide onto the lipid carrier undecaprenyl phosphate, yielding undecaprenyl-pyrophosphoryl-MurNAc-pentapeptide, known as lipid I. The polypeptide is Phospho-N-acetylmuramoyl-pentapeptide-transferase (Paracoccus denitrificans (strain Pd 1222)).